The sequence spans 336 residues: Probable deoxyhypusine synthase (336 aa).

The Nucleophile role is filled by Lys308.

It belongs to the deoxyhypusine synthase family. NAD(+) is required as a cofactor.

The catalysed reaction is [eIF5A protein]-L-lysine + spermidine = [eIF5A protein]-deoxyhypusine + propane-1,3-diamine. The protein operates within protein modification; eIF5A hypusination. Its function is as follows. Catalyzes the NAD-dependent oxidative cleavage of spermidine and the subsequent transfer of the butylamine moiety of spermidine to the epsilon-amino group of a specific lysine residue of the eIF-5A precursor protein to form the intermediate deoxyhypusine residue. This Thermococcus gammatolerans (strain DSM 15229 / JCM 11827 / EJ3) protein is Probable deoxyhypusine synthase.